Consider the following 223-residue polypeptide: Noggin (223 aa).

The N-terminal stretch at 1–26 is a signal peptide; the sequence is MDHSQCLVTIYAAAVLLGLRLQQGSC. An N-linked (GlcNAc...) asparagine glycan is attached at Asn61. 4 cysteine pairs are disulfide-bonded: Cys146/Cys183, Cys169/Cys219, Cys175/Cys221, and Cys198/Cys206.

The protein belongs to the noggin family. In terms of assembly, homodimer.

It localises to the secreted. Functionally, inhibitor of bone morphogenetic proteins (BMP) signaling. Controls somitogenesis by sequestering the BMP-4 activity which in turn differentiates distinct subtypes of the mesoderm along the mediolateral axis. This Gallus gallus (Chicken) protein is Noggin (NOG).